Reading from the N-terminus, the 634-residue chain is AAl-toxin cluster-specific transcription factor ALT13 (634 aa).

Residues 30-56 constitute a DNA-binding region (zn(2)-C6 fungal-type); that stretch reads CENCKRRKVRCSGANPCEQCLKVNVHC. Residues 66–89 form a disordered region; the sequence is RRSVPNSGADKNNQQGDTDRHNGA. Positions 69-81 are enriched in polar residues; that stretch reads VPNSGADKNNQQG.

Its subcellular location is the nucleus. Functionally, transcription factor that regulates the expression of the gene cluster that mediates the biosynthesis of AAL-toxins, sphinganine-analog mycotoxins responsible for Alternaria stem canker on tomato by the tomato pathotype. This Alternaria alternata (Alternaria rot fungus) protein is AAl-toxin cluster-specific transcription factor ALT13.